Here is a 514-residue protein sequence, read N- to C-terminus: Protein farnesyltransferase subunit beta (514 aa).

Basic residues predominate over residues 1-13; it reads MRHHTKNLRRRAI. The disordered stretch occupies residues 1–56; the sequence is MRHHTKNLRRRAIFLRTTPRGNMDSSSSVATSTSSSSNHRLVRSSEGSPSAGGDDI. Over residues 25-39 the composition is skewed to low complexity; sequence SSSSVATSTSSSSNH. PFTB repeat units follow at residues 180–221, 231–272, 293–334, 346–388, and 410–454; these read AESL…AVVG, RRAL…SLLN, FTGL…SLLG, IERL…PLIE, and REGL…SSAQ. Residues 319–322 and 367–370 contribute to the (2E,6E)-farnesyl diphosphate site; these read HGAY and RTNK. Asp-373 and Cys-375 together coordinate Zn(2+). Position 376-379 (376-379) interacts with (2E,6E)-farnesyl diphosphate; sequence YSHW. His-442 contributes to the Zn(2+) binding site.

Belongs to the protein prenyltransferase subunit beta family. In terms of assembly, heterodimer of an alpha and a beta subunit. Interacts with RAS1 and RAS2. Zn(2+) is required as a cofactor. In terms of tissue distribution, highly expressed in mycelium, conidium, conidial germination, early formed appressorium and the late infection hypha.

It localises to the cytoplasm. The catalysed reaction is L-cysteinyl-[protein] + (2E,6E)-farnesyl diphosphate = S-(2E,6E)-farnesyl-L-cysteinyl-[protein] + diphosphate. Its function is as follows. Catalyzes the transfer of a farnesyl moiety from farnesyl diphosphate to a cysteine at the fourth position from the C-terminus of several proteins having the C-terminal sequence Cys-aliphatic-aliphatic-X. The beta subunit is responsible for peptide-binding. In Pyricularia oryzae (strain 70-15 / ATCC MYA-4617 / FGSC 8958) (Rice blast fungus), this protein is Protein farnesyltransferase subunit beta (RAM1).